The sequence spans 308 residues: uncharacterized protein (308 aa).

7 residues coordinate NADP(+): Leu50, Asp90, Asn117, Tyr182, Lys186, Ile222, and Thr224. Residue Tyr182 is the Proton acceptor of the active site. The active-site Lowers pKa of active site Tyr is the Lys186.

Belongs to the short-chain dehydrogenases/reductases (SDR) family.

This is an uncharacterized protein from Saccharomyces cerevisiae (strain ATCC 204508 / S288c) (Baker's yeast).